A 259-amino-acid chain; its full sequence is Ribosomal RNA small subunit methyltransferase J (259 aa).

S-adenosyl-L-methionine contacts are provided by residues 101–102, 117–118, 153–154, and Asp176; these read RD, ER, and SS.

This sequence belongs to the methyltransferase superfamily. RsmJ family.

Its subcellular location is the cytoplasm. It carries out the reaction guanosine(1516) in 16S rRNA + S-adenosyl-L-methionine = N(2)-methylguanosine(1516) in 16S rRNA + S-adenosyl-L-homocysteine + H(+). Functionally, specifically methylates the guanosine in position 1516 of 16S rRNA. The sequence is that of Ribosomal RNA small subunit methyltransferase J from Aliivibrio fischeri (strain ATCC 700601 / ES114) (Vibrio fischeri).